The primary structure comprises 363 residues: FMNH(2)-dependent dimethylsulfone monooxygenase (363 aa).

Belongs to the SsuD family.

It carries out the reaction dimethyl sulfone + FMNH2 + O2 = methanesulfinate + FMN + formaldehyde + H2O + 2 H(+). In terms of biological role, involved in the dimethyl sulfide degradation pathway. Catalyzes the oxidation of dimethylsulfone (DMSO2) to yield methanesulfinate, which is oxidized spontaneously to methanesulfonate in the presence of dioxygen and FMNH(2). The protein is FMNH(2)-dependent dimethylsulfone monooxygenase of Pseudomonas putida (Arthrobacter siderocapsulatus).